The chain runs to 149 residues: Deoxyuridine 5'-triphosphate nucleotidohydrolase (149 aa).

Substrate-binding positions include Arg68–Gly70, Asn81, Leu85–Asp87, and Met95.

The protein belongs to the dUTPase family. It depends on Mg(2+) as a cofactor.

It catalyses the reaction dUTP + H2O = dUMP + diphosphate + H(+). The protein operates within pyrimidine metabolism; dUMP biosynthesis; dUMP from dCTP (dUTP route): step 2/2. Functionally, this enzyme is involved in nucleotide metabolism: it produces dUMP, the immediate precursor of thymidine nucleotides and it decreases the intracellular concentration of dUTP so that uracil cannot be incorporated into DNA. The polypeptide is Deoxyuridine 5'-triphosphate nucleotidohydrolase (Bordetella avium (strain 197N)).